Here is an 813-residue protein sequence, read N- to C-terminus: Phosphoribosylformylglycinamidine synthase subunit PurL (813 aa).

Histidine 56 is an active-site residue. Residues tyrosine 59 and lysine 103 each contribute to the ATP site. Glutamate 105 lines the Mg(2+) pocket. Residues 106–109 (SHNH) and arginine 128 contribute to the substrate site. Residue histidine 107 is the Proton acceptor of the active site. Position 129 (aspartate 129) interacts with Mg(2+). Substrate is bound at residue glutamine 253. Aspartate 281 is a Mg(2+) binding site. 325–327 (ESQ) contacts substrate. Residues asparagine 511 and glycine 548 each contribute to the ATP site. Asparagine 549 contacts Mg(2+). Position 551 (serine 551) interacts with substrate.

It belongs to the FGAMS family. Monomer. Part of the FGAM synthase complex composed of 1 PurL, 1 PurQ and 2 PurS subunits.

Its subcellular location is the cytoplasm. The enzyme catalyses N(2)-formyl-N(1)-(5-phospho-beta-D-ribosyl)glycinamide + L-glutamine + ATP + H2O = 2-formamido-N(1)-(5-O-phospho-beta-D-ribosyl)acetamidine + L-glutamate + ADP + phosphate + H(+). The protein operates within purine metabolism; IMP biosynthesis via de novo pathway; 5-amino-1-(5-phospho-D-ribosyl)imidazole from N(2)-formyl-N(1)-(5-phospho-D-ribosyl)glycinamide: step 1/2. Functionally, part of the phosphoribosylformylglycinamidine synthase complex involved in the purines biosynthetic pathway. Catalyzes the ATP-dependent conversion of formylglycinamide ribonucleotide (FGAR) and glutamine to yield formylglycinamidine ribonucleotide (FGAM) and glutamate. The FGAM synthase complex is composed of three subunits. PurQ produces an ammonia molecule by converting glutamine to glutamate. PurL transfers the ammonia molecule to FGAR to form FGAM in an ATP-dependent manner. PurS interacts with PurQ and PurL and is thought to assist in the transfer of the ammonia molecule from PurQ to PurL. The protein is Phosphoribosylformylglycinamidine synthase subunit PurL of Corynebacterium jeikeium (strain K411).